The following is a 47-amino-acid chain: Protein PsbN (47 aa).

Residues 7 to 29 (VAISISCLLISFTGYALYTAFGN) traverse the membrane as a helical segment.

It belongs to the PsbN family.

It localises to the plastid membrane. Its function is as follows. May play a role in photosystem I and II biogenesis. The polypeptide is Protein PsbN (Aneura mirabilis (Parasitic liverwort)).